A 605-amino-acid polypeptide reads, in one-letter code: Ankyrin repeat domain-containing protein 13D (605 aa).

ANK repeat units lie at residues arginine 39–lysine 68 and glutamine 72–alanine 101. The tract at residues alanine 306 to glutamate 333 is disordered. The segment covering glutamine 319 to alanine 328 has biased composition (polar residues). 2 UIM domains span residues glutamate 482 to glutamate 501 and glutamate 528 to proline 547. The disordered stretch occupies residues leucine 541–histidine 605. Positions proline 550–proline 563 are enriched in pro residues. Serine 552 is modified (phosphoserine). Threonine 556 is subject to Phosphothreonine. Over residues serine 564–leucine 575 the composition is skewed to low complexity. UIM domains are found at residues serine 564 to arginine 583 and glutamine 589 to histidine 605. The span at serine 576 to glutamine 589 shows a compositional bias: basic and acidic residues.

In terms of assembly, interacts with EGFR (ubiquitinated); the interaction is direct and may regulate EGFR internalization.

It localises to the cell membrane. It is found in the late endosome. Ubiquitin-binding protein that specifically recognizes and binds 'Lys-63'-linked ubiquitin. Does not bind 'Lys-48'-linked ubiquitin. Positively regulates the internalization of ligand-activated EGFR by binding to the Ub moiety of ubiquitinated EGFR at the cell membrane. The sequence is that of Ankyrin repeat domain-containing protein 13D (ANKRD13D) from Homo sapiens (Human).